The chain runs to 129 residues: uncharacterized protein (129 aa).

Residues K23–K101 are disordered. Composition is skewed to basic and acidic residues over residues C31–T40 and E67–P80.

This is an uncharacterized protein from Ictaluridae (bullhead catfishes).